The following is a 748-amino-acid chain: E3 ubiquitin-protein ligase DTX3L (748 aa).

Residue Ala-2 is modified to N-acetylalanine. A Phosphoserine modification is found at Ser-9. Disordered stretches follow at residues 94–117 (DLRP…PSLT), 209–238 (EQKR…PPDQ), and 528–562 (QETP…PAAS). The span at 101-117 (SLTQPVETPSSRPPSLT) shows a compositional bias: polar residues. 2 stretches are compositionally biased toward basic and acidic residues: residues 209–219 (EQKRKGSEQKR) and 227–236 (TPPDVEREPP). Ser-215 is modified (phosphoserine). Ser-536 is subject to Phosphoserine. The RING-type zinc finger occupies 569-608 (CVICMDTISNKHVLPKCKHEFCTSCISKAMLIKPVCPVCL).

It belongs to the Deltex family. In terms of assembly, homodimer and heterodimer. Can heterodimerize with DTX1, enhancing its ubiquitin ligase activity in vitro. Interacts (via N-terminus) with ADP ribosyltransferase PARP9/BAL1 (via PARP catalytic domain) forming a stable complex; the interaction is required to activate PARP9 but is dispensable for DTX3L catalytic activity. Forms a complex with STAT1 and PARP9 independently of IFNB1 or IFNG-mediated STAT1 'Tyr-701' phosphorylation. Found in a complex with PARP9, STAT1 and H2BC9. Found in a complex with E3 ligase ITCH and ESCRT-0 components HGS and STAM. Interacts (via C-terminus) with ITCH; the interaction is increased upon CXCL12 stimulation and inhibits ITCH catalytic activity; the interaction is direct. Interacts with HGS and STAM; the interaction brings together HGS and STAM and promotes their recruitment to early endosomes. Autoubiquitinated.

It is found in the cytoplasm. The protein resides in the nucleus. Its subcellular location is the early endosome membrane. The protein localises to the lysosome membrane. The catalysed reaction is S-ubiquitinyl-[E2 ubiquitin-conjugating enzyme]-L-cysteine + [acceptor protein]-L-lysine = [E2 ubiquitin-conjugating enzyme]-L-cysteine + N(6)-ubiquitinyl-[acceptor protein]-L-lysine.. It participates in protein modification; protein ubiquitination. With respect to regulation, binding to PARP9 enhances DTX3L catalytic activity. Its function is as follows. E3 ubiquitin-protein ligase which, in association with ADP-ribosyltransferase PARP9, plays a role in DNA damage repair and in interferon-mediated antiviral responses. Monoubiquitinates several histones, including histone H2A, H2B, H3 and H4. In response to DNA damage, mediates monoubiquitination of 'Lys-91' of histone H4 (H4K91ub1). The exact role of H4K91ub1 in DNA damage response is still unclear but it may function as a licensing signal for additional histone H4 post-translational modifications such as H4 'Lys-20' methylation (H4K20me). PARP1-dependent PARP9-DTX3L-mediated ubiquitination promotes the rapid and specific recruitment of 53BP1/TP53BP1, UIMC1/RAP80, and BRCA1 to DNA damage sites. By monoubiquitinating histone H2B H2BC9/H2BJ and thereby promoting chromatin remodeling, positively regulates STAT1-dependent interferon-stimulated gene transcription and thus STAT1-mediated control of viral replication. Independently of its catalytic activity, promotes the sorting of chemokine receptor CXCR4 from early endosome to lysosome following CXCL12 stimulation by reducing E3 ligase ITCH activity and thus ITCH-mediated ubiquitination of endosomal sorting complex required for transport ESCRT-0 components HGS and STAM. In addition, required for the recruitment of HGS and STAM to early endosomes. The sequence is that of E3 ubiquitin-protein ligase DTX3L (Dtx3l) from Mus musculus (Mouse).